A 112-amino-acid polypeptide reads, in one-letter code: Nucleoid-associated protein FTN_1196 (112 aa).

Residues 1–27 (MNFDMSKLMQQAQKMQEQMKKAQQERE) form a disordered region. The segment covering 17 to 27 (EQMKKAQQERE) has biased composition (basic and acidic residues).

It belongs to the YbaB/EbfC family. Homodimer.

Its subcellular location is the cytoplasm. It localises to the nucleoid. In terms of biological role, binds to DNA and alters its conformation. May be involved in regulation of gene expression, nucleoid organization and DNA protection. This is Nucleoid-associated protein FTN_1196 from Francisella tularensis subsp. novicida (strain U112).